The chain runs to 1322 residues: Phosphoribosylformylglycinamidine synthase (1322 aa).

ATP contacts are provided by residues 300–311 and alanine 702; that span reads GASTGAGGEIRD. Positions 703, 742, 746, and 915 each coordinate Mg(2+). Serine 917 is an ATP binding site. The Glutamine amidotransferase type-1 domain occupies 1073–1322; it reads VAILREQGIN…LFRNARAWVG (250 aa). Cysteine 1166 acts as the Nucleophile in catalysis. Residues histidine 1287 and glutamate 1289 contribute to the active site.

This sequence in the N-terminal section; belongs to the FGAMS family. As to quaternary structure, monomer.

Its subcellular location is the cytoplasm. It catalyses the reaction N(2)-formyl-N(1)-(5-phospho-beta-D-ribosyl)glycinamide + L-glutamine + ATP + H2O = 2-formamido-N(1)-(5-O-phospho-beta-D-ribosyl)acetamidine + L-glutamate + ADP + phosphate + H(+). Its pathway is purine metabolism; IMP biosynthesis via de novo pathway; 5-amino-1-(5-phospho-D-ribosyl)imidazole from N(2)-formyl-N(1)-(5-phospho-D-ribosyl)glycinamide: step 1/2. Functionally, phosphoribosylformylglycinamidine synthase involved in the purines biosynthetic pathway. Catalyzes the ATP-dependent conversion of formylglycinamide ribonucleotide (FGAR) and glutamine to yield formylglycinamidine ribonucleotide (FGAM) and glutamate. This chain is Phosphoribosylformylglycinamidine synthase, found in Xylella fastidiosa (strain Temecula1 / ATCC 700964).